The sequence spans 88 residues: Eclosion hormone (88 aa).

The N-terminal stretch at 1–26 is a signal peptide; it reads MANKLTAVIVVALAVAFMVNLDYANC. Disulfide bonds link Cys-40-Cys-64, Cys-44-Cys-60, and Cys-47-Cys-75.

Belongs to the insect eclosion hormone family.

Its subcellular location is the secreted. Its function is as follows. Neuropeptide that triggers the performance of ecdysis behaviors at the end of a molt. It triggers adult behavior patterns: larval, pupal and adult ecdysis, and plasticization during the molt. This chain is Eclosion hormone, found in Bombyx mori (Silk moth).